The following is a 611-amino-acid chain: Vitamin B12 transporter BtuB (611 aa).

The signal sequence occupies residues 1–22 (MQKSALAIALASLLTPISYLHA). The short motif at 29-36 (ETVVVTAN) is the TonB box element. Residues 41–154 (KASSTLADVE…IGGVINIITK (114 aa)) enclose the TBDR plug domain. A TBDR beta-barrel domain is found at 159–611 (QQGTTVSAGL…AYYLNIGYQF (453 aa)). The TonB C-terminal box motif lies at 594-611 (NGYPAAERAYYLNIGYQF).

The protein belongs to the TonB-dependent receptor family. BtuB (TC 1.B.14.3.1) subfamily.

The protein resides in the cell outer membrane. Its function is as follows. Involved in the active translocation of vitamin B12 (cyanocobalamin) across the outer membrane to the periplasmic space. It derives its energy for transport by interacting with the trans-periplasmic membrane protein TonB. This Vibrio cholerae serotype O1 (strain ATCC 39541 / Classical Ogawa 395 / O395) protein is Vitamin B12 transporter BtuB.